A 201-amino-acid polypeptide reads, in one-letter code: FMN-dependent NADH:quinone oxidoreductase (201 aa).

Residues Ser10, 16 to 18, 96 to 99, and 140 to 143 each bind FMN; these read SQS, MYNF, and SRGG.

This sequence belongs to the azoreductase type 1 family. In terms of assembly, homodimer. Requires FMN as cofactor.

It carries out the reaction 2 a quinone + NADH + H(+) = 2 a 1,4-benzosemiquinone + NAD(+). The enzyme catalyses N,N-dimethyl-1,4-phenylenediamine + anthranilate + 2 NAD(+) = 2-(4-dimethylaminophenyl)diazenylbenzoate + 2 NADH + 2 H(+). Functionally, quinone reductase that provides resistance to thiol-specific stress caused by electrophilic quinones. In terms of biological role, also exhibits azoreductase activity. Catalyzes the reductive cleavage of the azo bond in aromatic azo compounds to the corresponding amines. In Salmonella arizonae (strain ATCC BAA-731 / CDC346-86 / RSK2980), this protein is FMN-dependent NADH:quinone oxidoreductase.